The primary structure comprises 198 residues: MTINLILLSLLAYVIGSIPSGLWIGKFFYKKDIREFGSGNLGATNSFRVLGIKAGSIVTVMDILKGTVATLLPFFFQLHVDHHFWLLTGAFAIIGHSFPLFAGFRGGKAVATSAGVILAYAPLLFVAALIIFLLTLKISKYVSLSSMIAALAALLISLFMGDWILIILIACITLFVVWRHRANITRIRNGEEPKIKWM.

Helical transmembrane passes span 5–25, 56–76, 84–104, 114–134, and 158–178; these read LILL…LWIG, SIVT…PFFF, FWLL…FAGF, AGVI…IFLL, and LFMG…FVVW.

The protein belongs to the PlsY family. Probably interacts with PlsX.

The protein resides in the cell membrane. The catalysed reaction is an acyl phosphate + sn-glycerol 3-phosphate = a 1-acyl-sn-glycero-3-phosphate + phosphate. The protein operates within lipid metabolism; phospholipid metabolism. Catalyzes the transfer of an acyl group from acyl-phosphate (acyl-PO(4)) to glycerol-3-phosphate (G3P) to form lysophosphatidic acid (LPA). This enzyme utilizes acyl-phosphate as fatty acyl donor, but not acyl-CoA or acyl-ACP. This Listeria welshimeri serovar 6b (strain ATCC 35897 / DSM 20650 / CCUG 15529 / CIP 8149 / NCTC 11857 / SLCC 5334 / V8) protein is Glycerol-3-phosphate acyltransferase.